The sequence spans 124 residues: Putative outer membrane protein TC_0858 (124 aa).

The N-terminal stretch at 1–31 is a signal peptide; that stretch reads MGKTKKRKQSITLIEMMVVITLIGIISGALA.

It localises to the cell outer membrane. The polypeptide is Putative outer membrane protein TC_0858 (Chlamydia muridarum (strain MoPn / Nigg)).